The following is a 733-amino-acid chain: Centrosomal protein of 68 kDa (733 aa).

Over residues 71–80 (SKEPVADRSK) the composition is skewed to basic and acidic residues. Disordered stretches follow at residues 71 to 92 (SKEP…SASV), 150 to 207 (GLSQ…SFAN), and 222 to 244 (VVGA…DATG). Residues 178-190 (SSRSISASSVGSS) show a composition bias toward low complexity. Residues 231-241 (GSAQPLTSGSD) are compositionally biased toward polar residues. Ser315 carries the post-translational modification Phosphoserine. The tract at residues 420-442 (PQLKTKEKEPPFPRQKRGRQHVS) is disordered. Ser453 and Ser459 each carry phosphoserine. The segment at 497–571 (HSSLQVSDSD…KPLKTQPASK (75 aa)) is disordered. Polar residues predominate over residues 540–569 (IQPQDSRGKSSLMSNQTLGVSSKPLKTQPA).

As to quaternary structure, interacts with CNTLN; the interaction recruits CEP68 to the centrosome. Interacts with the SCF(FBXW11) complex which contains SKP1, CUL1 and FBXW11; the interaction is probably mediated by FBXW11 and the complex also contains CDK5RAP2 and PCNT. Also interacts with F-box protein BTRC. Interacts with serine/threonine-protein kinase PLK1; the interaction leads to phosphorylation of CEP68 and its subsequent degradation. Interacts with NEK2; the interaction leads to phosphorylation of CEP68. Post-translationally, phosphorylation by PLK1 is required for binding to BTRC in prometaphase. Phosphorylated directly or indirectly by NEK2. NEK2-mediated phosphorylation promotes CEP68 dissociation from the centrosome and its degradation at the onset of mitosis. Ubiquitinated and targeted for proteasomal degradation in early mitosis by the SCF(BTRC) and/or SCF(FBXW11) E3 ubiquitin-protein ligase complexes. Degradation is complete by prometaphase and is required for removal of CDK5RAP2 from the peripheral pericentriolar material and subsequent centriole separation.

The protein resides in the cytoplasm. It localises to the cytoskeleton. Its subcellular location is the microtubule organizing center. It is found in the centrosome. Functionally, involved in maintenance of centrosome cohesion, probably as part of a linker structure which prevents centrosome splitting. Required for localization of CDK5RAP2 to the centrosome during interphase. Contributes to CROCC/rootletin filament formation. This chain is Centrosomal protein of 68 kDa (Cep68), found in Mus musculus (Mouse).